The chain runs to 192 residues: Probable cobalt-precorrin-6B C(15)-methyltransferase (decarboxylating) (192 aa).

Residues Thr-17, 41–45, Asp-62, and Ala-91 contribute to the S-adenosyl-L-methionine site; that span reads GCGTG.

The protein belongs to the methyltransferase superfamily. Archaeal-type CbiT family. Homotetramer.

It catalyses the reaction Co-precorrin-6B + S-adenosyl-L-methionine = Co-precorrin-7 + S-adenosyl-L-homocysteine + CO2. Its pathway is cofactor biosynthesis; adenosylcobalamin biosynthesis; cob(II)yrinate a,c-diamide from sirohydrochlorin (anaerobic route): step 8/10. Its function is as follows. Catalyzes the methylation of C-15 in cobalt-precorrin-6B followed by the decarboxylation of C-12 to form cobalt-precorrin-7. The protein is Probable cobalt-precorrin-6B C(15)-methyltransferase (decarboxylating) of Methanothermobacter thermautotrophicus (strain ATCC 29096 / DSM 1053 / JCM 10044 / NBRC 100330 / Delta H) (Methanobacterium thermoautotrophicum).